The primary structure comprises 365 residues: Terpene cyclase 4 (365 aa).

Positions 1-11 (MVPSLITPPPS) are enriched in pro residues. Residues 1-20 (MVPSLITPPPSRSGEATPQK) form a disordered region. Positions 118, 260, and 264 each coordinate Mg(2+). A D(D/E)XX(D/E) motif motif is present at residues 118 to 122 (DDPFD). The short motif at 260–268 (NDLCSYRKD) is the NSE motif element. The WxxxxxRY motif motif lies at 341–348 (WSLYTFRY). Arginine 347 and tyrosine 348 together coordinate (2E,6E)-farnesyl diphosphate.

It belongs to the terpene synthase family. Homodimer. Requires Mg(2+) as cofactor.

The catalysed reaction is (2E,6E)-farnesyl diphosphate + H2O = koraiol + diphosphate. The protein operates within sesquiterpene biosynthesis. Terpene cyclase that catalyzes the cyclization of farnesyl diphosphate (FPP) to the sesquiterpene koraiol. The protein is Terpene cyclase 4 of Gibberella fujikuroi (strain CBS 195.34 / IMI 58289 / NRRL A-6831) (Bakanae and foot rot disease fungus).